The chain runs to 158 residues: MNIRRRRRLLVVVAILVGLGLATGLVMYALRSNIDLFYTPSEILNGRGPEHKDIPHPGQRLRIGGMVMPGSVKRDPKSLAVEFKLYDANGVVSVSYVGILPDLFREGQGIVAEGVLEDGNLSGDQVLAKHDEKYTPPEIEDAMKQNHKGLLNVSEPTR.

The Cytoplasmic portion of the chain corresponds to Met-1–Arg-8. A helical; Signal-anchor for type II membrane protein membrane pass occupies residues Leu-9–Ala-29. The Periplasmic segment spans residues Leu-30–Arg-158. Positions 130 and 134 each coordinate heme.

It belongs to the CcmE/CycJ family.

The protein resides in the cell inner membrane. Functionally, heme chaperone required for the biogenesis of c-type cytochromes. Transiently binds heme delivered by CcmC and transfers the heme to apo-cytochromes in a process facilitated by CcmF and CcmH. The sequence is that of Cytochrome c-type biogenesis protein CcmE from Tatumella citrea (Pantoea citrea).